The chain runs to 190 residues: RNA pyrophosphohydrolase (190 aa).

The region spanning 6 to 149 (GYRPNVGIVL…KRSVYARALC (144 aa)) is the Nudix hydrolase domain. The Nudix box signature appears at 38 to 59 (GGMHSDETPVEAMYRELNEETG).

It belongs to the Nudix hydrolase family. RppH subfamily. The cofactor is a divalent metal cation.

Its function is as follows. Accelerates the degradation of transcripts by removing pyrophosphate from the 5'-end of triphosphorylated RNA, leading to a more labile monophosphorylated state that can stimulate subsequent ribonuclease cleavage. This chain is RNA pyrophosphohydrolase, found in Xylella fastidiosa (strain Temecula1 / ATCC 700964).